Consider the following 91-residue polypeptide: MWPIFWTAMRTYAPYVTFPVAFVVGAVGYHLEWFIRGTPNTPGEERGIAELREDRKLEELNGRDSTQVLSLKDKLEFTPRAVLERNRAVKS.

Residues 12–34 (YAPYVTFPVAFVVGAVGYHLEWF) form a helical membrane-spanning segment.

This sequence belongs to the SMIM12 family.

The protein resides in the membrane. The protein is Small integral membrane protein 12 (smim12) of Danio rerio (Zebrafish).